A 165-amino-acid polypeptide reads, in one-letter code: Small ribosomal subunit protein uS3m (165 aa).

The N-terminal 30 residues, 1 to 30 (MNFLKKLLPQVATEVQQLSRSGFHTSSVCC), are a transit peptide targeting the mitochondrion.

It belongs to the universal ribosomal protein uS3 family. As to quaternary structure, component of the mitochondrial ribosome small subunit (28S) which comprises a 12S rRNA and about 30 distinct proteins.

The protein resides in the mitochondrion. The sequence is that of Small ribosomal subunit protein uS3m (mRpS24) from Drosophila melanogaster (Fruit fly).